The chain runs to 274 residues: Rhamnulose-1-phosphate aldolase (274 aa).

The active site involves Glu-117. Zn(2+) is bound by residues His-141, His-143, and His-212.

Belongs to the aldolase class II family. RhaD subfamily. As to quaternary structure, homotetramer. Requires Zn(2+) as cofactor.

It is found in the cytoplasm. The enzyme catalyses L-rhamnulose 1-phosphate = (S)-lactaldehyde + dihydroxyacetone phosphate. The protein operates within carbohydrate degradation; L-rhamnose degradation; glycerone phosphate from L-rhamnose: step 3/3. Catalyzes the reversible cleavage of L-rhamnulose-1-phosphate to dihydroxyacetone phosphate (DHAP) and L-lactaldehyde. The sequence is that of Rhamnulose-1-phosphate aldolase from Escherichia coli (strain K12 / MC4100 / BW2952).